The following is a 192-amino-acid chain: MNDVTEPVSATLAERAKRTLGKRNLVFIGLMGAGKSAIGRLTAQALGVPFVDSDHEIERVSRMTVSDLFATYGEEEFRALEARVLKRLLRSGPRVVSTGGGAYINERSRRHIKKGGLTIWLNAELDVLWERVNKRDTRPLLKTENPKQTLENLMRARYPIYAEADLTVLSRDVKKEAMVEEVLAAVADHQKA.

32–37 (GAGKSA) contacts ATP. Ser-36 is a Mg(2+) binding site. Asp-54, Arg-78, and Gly-100 together coordinate substrate. Arg-138 lines the ATP pocket. Arg-157 provides a ligand contact to substrate.

It belongs to the shikimate kinase family. In terms of assembly, monomer. Mg(2+) is required as a cofactor.

The protein localises to the cytoplasm. The enzyme catalyses shikimate + ATP = 3-phosphoshikimate + ADP + H(+). The protein operates within metabolic intermediate biosynthesis; chorismate biosynthesis; chorismate from D-erythrose 4-phosphate and phosphoenolpyruvate: step 5/7. In terms of biological role, catalyzes the specific phosphorylation of the 3-hydroxyl group of shikimic acid using ATP as a cosubstrate. This Rhizobium meliloti (strain 1021) (Ensifer meliloti) protein is Shikimate kinase.